Here is a 567-residue protein sequence, read N- to C-terminus: Laccase-3 (567 aa).

A signal peptide spans 1–24; it reads MASSSSSRLLFLLSCSVLALLAGA. Plastocyanin-like domains are found at residues 32–148 and 158–310; these read IVQE…PREN and REVP…YDCG. N-linked (GlcNAc...) asparagine glycosylation occurs at asparagine 78. Cu cation contacts are provided by histidine 82, histidine 84, histidine 127, and histidine 129. Residues asparagine 148, asparagine 187, asparagine 203, asparagine 298, asparagine 330, asparagine 379, and asparagine 389 are each glycosylated (N-linked (GlcNAc...) asparagine). Positions 415 to 551 constitute a Plastocyanin-like 3 domain; sequence DFPAYPPVQF…AMAFLVEDGY (137 aa). The Cu cation site is built by histidine 468, histidine 471, histidine 473, histidine 530, cysteine 531, histidine 532, and histidine 536.

The protein belongs to the multicopper oxidase family. Cu cation is required as a cofactor.

The protein resides in the secreted. The protein localises to the extracellular space. It localises to the apoplast. The enzyme catalyses 4 hydroquinone + O2 = 4 benzosemiquinone + 2 H2O. Its function is as follows. Lignin degradation and detoxification of lignin-derived products. This is Laccase-3 (LAC3) from Oryza sativa subsp. japonica (Rice).